Here is a 399-residue protein sequence, read N- to C-terminus: Elongation factor Tu (399 aa).

The tr-type G domain maps to 10–209 (KPHVNIGTIG…KVDEYIPTPV (200 aa)). The G1 stretch occupies residues 19-26 (GHVDHGKT). Position 19–26 (19–26 (GHVDHGKT)) interacts with GTP. A Mg(2+)-binding site is contributed by Thr26. A G2 region spans residues 60 to 64 (GITIA). A G3 region spans residues 81 to 84 (DCPG). Residues 81 to 85 (DCPGH) and 136 to 139 (NKAD) contribute to the GTP site. A G4 region spans residues 136-139 (NKAD). A G5 region spans residues 174–176 (SAL).

This sequence belongs to the TRAFAC class translation factor GTPase superfamily. Classic translation factor GTPase family. EF-Tu/EF-1A subfamily. Monomer.

The protein localises to the cytoplasm. It carries out the reaction GTP + H2O = GDP + phosphate + H(+). Its function is as follows. GTP hydrolase that promotes the GTP-dependent binding of aminoacyl-tRNA to the A-site of ribosomes during protein biosynthesis. This chain is Elongation factor Tu, found in Campylobacter curvus (strain 525.92).